The chain runs to 860 residues: Leucine--tRNA ligase (860 aa).

The 'HIGH' region motif lies at 42-52 (PYPSGRLHMGH). The short motif at 619–623 (KMSKS) is the 'KMSKS' region element. ATP is bound at residue Lys-622.

The protein belongs to the class-I aminoacyl-tRNA synthetase family.

Its subcellular location is the cytoplasm. It carries out the reaction tRNA(Leu) + L-leucine + ATP = L-leucyl-tRNA(Leu) + AMP + diphosphate. This is Leucine--tRNA ligase from Citrobacter koseri (strain ATCC BAA-895 / CDC 4225-83 / SGSC4696).